The following is a 407-amino-acid chain: Phosphopentomutase (407 aa).

The Mn(2+) site is built by Asp11, Asp305, His310, Asp346, His347, and His358.

The protein belongs to the phosphopentomutase family. Mn(2+) serves as cofactor.

Its subcellular location is the cytoplasm. It catalyses the reaction 2-deoxy-alpha-D-ribose 1-phosphate = 2-deoxy-D-ribose 5-phosphate. The enzyme catalyses alpha-D-ribose 1-phosphate = D-ribose 5-phosphate. Its pathway is carbohydrate degradation; 2-deoxy-D-ribose 1-phosphate degradation; D-glyceraldehyde 3-phosphate and acetaldehyde from 2-deoxy-alpha-D-ribose 1-phosphate: step 1/2. Its function is as follows. Isomerase that catalyzes the conversion of deoxy-ribose 1-phosphate (dRib-1-P) and ribose 1-phosphate (Rib-1-P) to deoxy-ribose 5-phosphate (dRib-5-P) and ribose 5-phosphate (Rib-5-P), respectively. The protein is Phosphopentomutase of Legionella pneumophila (strain Lens).